Here is a 214-residue protein sequence, read N- to C-terminus: Osteoclast-stimulating factor 1 (214 aa).

Residues 12–71 (GQVKVFRALFTFDPRTPDELYFEEGDILYISDTSDTNWWKGTCRGRTGLIPSNYVAEQAE) form the SH3 domain. 3 ANK repeats span residues 72–101 (TIDH…GING), 105–135 (AGNT…ELNQ), and 139–168 (LGDT…RTDI).

In terms of tissue distribution, ubiquitously expressed.

It is found in the cytoplasm. In terms of biological role, induces bone resorption, acting probably through a signaling cascade which results in the secretion of factor(s) enhancing osteoclast formation and activity. This Monopterus albus (Swamp eel) protein is Osteoclast-stimulating factor 1 (ostf1).